A 210-amino-acid chain; its full sequence is N-(5'-phosphoribosyl)anthranilate isomerase (210 aa).

Belongs to the TrpF family.

The enzyme catalyses N-(5-phospho-beta-D-ribosyl)anthranilate = 1-(2-carboxyphenylamino)-1-deoxy-D-ribulose 5-phosphate. Its pathway is amino-acid biosynthesis; L-tryptophan biosynthesis; L-tryptophan from chorismate: step 3/5. This Trichormus variabilis (strain ATCC 29413 / PCC 7937) (Anabaena variabilis) protein is N-(5'-phosphoribosyl)anthranilate isomerase.